Consider the following 178-residue polypeptide: Ribulose bisphosphate carboxylase small subunit, chloroplastic (178 aa).

The transit peptide at 1 to 54 (MASISSSVATVSRTAPAQANMVAPFTGLKSNAAFPTTKKANDFSTLPSNGGRVQ) directs the protein to the chloroplast.

Belongs to the RuBisCO small chain family. Heterohexadecamer of 8 large and 8 small subunits.

It is found in the plastid. It localises to the chloroplast. In terms of biological role, ruBisCO catalyzes two reactions: the carboxylation of D-ribulose 1,5-bisphosphate, the primary event in carbon dioxide fixation, as well as the oxidative fragmentation of the pentose substrate. Both reactions occur simultaneously and in competition at the same active site. Although the small subunit is not catalytic it is essential for maximal activity. The chain is Ribulose bisphosphate carboxylase small subunit, chloroplastic from Helianthus annuus (Common sunflower).